Here is a 147-residue protein sequence, read N- to C-terminus: Cystatin-9-like (147 aa).

Residues 1-28 (MLGLPWKGGLSWALLLLLLGSQILLIYA) form the signal peptide. C98 and C108 are disulfide-bonded. N-linked (GlcNAc...) asparagine glycosylation is found at N117 and N139. An intrachain disulfide couples C122 to C142.

The protein belongs to the cystatin family. In terms of tissue distribution, specifically expressed in testis.

It is found in the secreted. This Homo sapiens (Human) protein is Cystatin-9-like (CST9L).